Here is a 174-residue protein sequence, read N- to C-terminus: Endoribonuclease YbeY (174 aa).

Residues H129, H133, and H139 each contribute to the Zn(2+) site.

Belongs to the endoribonuclease YbeY family. It depends on Zn(2+) as a cofactor.

The protein localises to the cytoplasm. In terms of biological role, single strand-specific metallo-endoribonuclease involved in late-stage 70S ribosome quality control and in maturation of the 3' terminus of the 16S rRNA. The polypeptide is Endoribonuclease YbeY (Lactobacillus acidophilus (strain ATCC 700396 / NCK56 / N2 / NCFM)).